We begin with the raw amino-acid sequence, 184 residues long: Photosystem I assembly protein Ycf4 (184 aa).

The next 2 helical transmembrane spans lie at 22–42 (FFWACILFLGSLGFLLVGTSS) and 57–77 (ILFFPQGIVMSFYGIAGLFIS).

It belongs to the Ycf4 family.

The protein localises to the plastid. It localises to the chloroplast thylakoid membrane. In terms of biological role, seems to be required for the assembly of the photosystem I complex. This is Photosystem I assembly protein Ycf4 from Nandina domestica (Heavenly bamboo).